The sequence spans 253 residues: Imidazole glycerol phosphate synthase subunit HisF (253 aa).

Residues Asp11 and Asp130 contribute to the active site.

This sequence belongs to the HisA/HisF family. Heterodimer of HisH and HisF.

It localises to the cytoplasm. The catalysed reaction is 5-[(5-phospho-1-deoxy-D-ribulos-1-ylimino)methylamino]-1-(5-phospho-beta-D-ribosyl)imidazole-4-carboxamide + L-glutamine = D-erythro-1-(imidazol-4-yl)glycerol 3-phosphate + 5-amino-1-(5-phospho-beta-D-ribosyl)imidazole-4-carboxamide + L-glutamate + H(+). It participates in amino-acid biosynthesis; L-histidine biosynthesis; L-histidine from 5-phospho-alpha-D-ribose 1-diphosphate: step 5/9. Functionally, IGPS catalyzes the conversion of PRFAR and glutamine to IGP, AICAR and glutamate. The HisF subunit catalyzes the cyclization activity that produces IGP and AICAR from PRFAR using the ammonia provided by the HisH subunit. This Dehalococcoides mccartyi (strain ATCC BAA-2266 / KCTC 15142 / 195) (Dehalococcoides ethenogenes (strain 195)) protein is Imidazole glycerol phosphate synthase subunit HisF.